The chain runs to 211 residues: dITP/XTP pyrophosphatase (211 aa).

Position 13–18 (13–18 (THNPGK)) interacts with substrate. Mg(2+) is bound by residues aspartate 45 and aspartate 74. The active-site Proton acceptor is the aspartate 74. Substrate is bound by residues serine 75, 160 to 163 (FGYD), lysine 183, and 195 to 196 (HR).

This sequence belongs to the HAM1 NTPase family. As to quaternary structure, homodimer. The cofactor is Mg(2+).

The enzyme catalyses XTP + H2O = XMP + diphosphate + H(+). It carries out the reaction dITP + H2O = dIMP + diphosphate + H(+). The catalysed reaction is ITP + H2O = IMP + diphosphate + H(+). Its function is as follows. Pyrophosphatase that catalyzes the hydrolysis of nucleoside triphosphates to their monophosphate derivatives, with a high preference for the non-canonical purine nucleotides XTP (xanthosine triphosphate), dITP (deoxyinosine triphosphate) and ITP. Seems to function as a house-cleaning enzyme that removes non-canonical purine nucleotides from the nucleotide pool, thus preventing their incorporation into DNA/RNA and avoiding chromosomal lesions. The sequence is that of dITP/XTP pyrophosphatase from Bradyrhizobium diazoefficiens (strain JCM 10833 / BCRC 13528 / IAM 13628 / NBRC 14792 / USDA 110).